The following is a 610-amino-acid chain: MIQVLLVTICLAVFPYQGSSIILESGNVNDYEVVYPRKVPALPKGAVQPKYEDAMQYEFKVNGEPVVLHLEKNKGLFSEDYSETHYSPDGREITTNPPVEDHCYYHGRIQNDADSTASISACNGLKGHFTLQGETYLIEPLKLPDSEAHAVFKYENVEKEDEAPKMCGVTQNWESYEPIKKASQSNLTPEQQRYLNAKKYVKLVMVADYIMYLKYDRNLTTVRTRMYDIVNVINVIYQRMNIHVALVGLEIWSNKDKFILRSAADVTLKLFATWRETDLLKRKSHDNAQLLTGINFNGPTAGLGYLGGICNPMYSAGIVQDHNKIHHLVAIAMAHEMGHNLGIDHDKDTCTCGAKSCVMAGTLSCEASYLFSDCSRKEHQAFLIKDMPQCILKKPLKTDVVSPPVCGNYFVEVGEDCDCGSPATCRDSCCDAATCKLRQGAQCAEGLCCDQCRFKGAGTECRAATDECDMADLCTGRSAECTDRFQRNGQPCQNNNGYCYNGKCPIMTDQCIALFGPNAAVSEDACFQFNLEGNHYGYCRKEQNTKIACEPQNVKCGRLYCIDSSPANKNPCNIYYSPGDEDKGMVLPGTKCADGKACSNGQCVDVNRAS.

A signal peptide spans 1-20; it reads MIQVLLVTICLAVFPYQGSS. The propeptide occupies 21–182; the sequence is IILESGNVND…WESYEPIKKA (162 aa). One can recognise a Peptidase M12B domain in the interval 199 to 395; sequence KYVKLVMVAD…DMPQCILKKP (197 aa). Asn218 carries an N-linked (GlcNAc...) asparagine glycan. 3 cysteine pairs are disulfide-bonded: Cys310-Cys390, Cys350-Cys374, and Cys352-Cys357. His335 is a binding site for Zn(2+). Glu336 is an active-site residue. Positions 339 and 345 each coordinate Zn(2+). Positions 403–488 constitute a Disintegrin domain; sequence PPVCGNYFVE…AECTDRFQRN (86 aa). Ca(2+) contacts are provided by Val405, Asn408, Phe410, Glu412, Glu415, and Asp418. 14 cysteine pairs are disulfide-bonded: Cys406–Cys435, Cys417–Cys430, Cys419–Cys425, Cys429–Cys452, Cys443–Cys449, Cys448–Cys474, Cys461–Cys481, Cys468–Cys499, Cys492–Cys504, Cys511–Cys561, Cys526–Cys572, Cys539–Cys549, Cys556–Cys598, and Cys592–Cys603. Positions 467 to 469 match the D/ECD-tripeptide motif; it reads ECD.

The protein belongs to the venom metalloproteinase (M12B) family. P-III subfamily. P-IIIa sub-subfamily. Monomer. It depends on Zn(2+) as a cofactor. In terms of tissue distribution, expressed by the venom gland.

It is found in the secreted. With respect to regulation, inhibited by EDTA and EGTA. Not inhibited by PMSF, antipain, pepstatin, and iodoacetamide. Strongly inhibits the collagen-induced human platelet aggregation (inhibition of alpha-2/beta-1 (ITGA2/ITGB1) integrin). Hydrolyzes the Aalpha-chain of fibrinogen, without cleavage of Bbeta- and gamma-chains. Degrades type IV collagen (but not types I, II and V), fibronectin and vitronectin and also integrins alpha-1/beta-1 (ITGA1/ITGB1) and alpha-5/beta/1 (ITGA5/ITGB1) (but not alpha-V/beta-3 (ITGAV/ITGB3) and alpha-V/beta-5 (ITGAV/ITGB5) integrins). Both metalloproteinase (peptidase M12B) and disintegrin-like domains (recombinantly expressed and named halydin) play characteristic roles to inhibit human platelet aggregation. Induces apoptosis and strongly inhibits proliferation of endothelial cells as well as adhesion of the cells to extracellular matrix proteins. The apoptosis is closely associated with activation of caspase-3 and decreased level of Bcl-X(L)/Bax. Apohalysase, which lacks metalloprotease activity, is also able to induce the apoptosis. Cleaves insulin B chain at '34-His-|-Leu-35', '37-Glu-|-Ala-38', '38-Ala-|-Leu-39', '39-Leu-|-Tyr-40', '40-Tyr-|-Leu-41', '47-Gly-|-Phe-48' and '48-Phe-|-Phe-49' bonds. The sequence is that of Zinc metalloproteinase-disintegrin-like halysase from Gloydius halys (Chinese water mocassin).